Consider the following 440-residue polypeptide: Adenylosuccinate synthetase (440 aa).

Residues 11–17 (GDEGKGG) and 39–41 (GHT) each bind GTP. Residue Asp-12 is the Proton acceptor of the active site. Residues Asp-12 and Gly-39 each contribute to the Mg(2+) site. Residues 12-15 (DEGK), 37-40 (NAGH), Thr-127, Arg-141, Gln-230, Thr-245, and Arg-311 contribute to the IMP site. The active-site Proton donor is the His-40. 307–313 (TVTGRPR) is a substrate binding site. GTP is bound by residues Arg-313, 339–341 (HLD), and 424–426 (GVG).

Belongs to the adenylosuccinate synthetase family. Homodimer. It depends on Mg(2+) as a cofactor.

The protein localises to the cytoplasm. The enzyme catalyses IMP + L-aspartate + GTP = N(6)-(1,2-dicarboxyethyl)-AMP + GDP + phosphate + 2 H(+). The protein operates within purine metabolism; AMP biosynthesis via de novo pathway; AMP from IMP: step 1/2. In terms of biological role, plays an important role in the de novo pathway of purine nucleotide biosynthesis. Catalyzes the first committed step in the biosynthesis of AMP from IMP. The polypeptide is Adenylosuccinate synthetase (Halobacterium salinarum (strain ATCC 29341 / DSM 671 / R1)).